The primary structure comprises 520 residues: Cell division control protein 3 (520 aa).

Basic and acidic residues predominate over residues 1-24; it reads MSLKEEQVSIKQDPEQEERQHDQF. The interval 1-83 is disordered; sequence MSLKEEQVSI…SSQSEKGQVL (83 aa). The residue at position 2 (Ser2) is an N-acetylserine. A Phosphoserine modification is found at Ser2. Lys4 is covalently cross-linked (Glycyl lysine isopeptide (Lys-Gly) (interchain with G-Cter in SUMO)). Ser9 is subject to Phosphoserine. Glycyl lysine isopeptide (Lys-Gly) (interchain with G-Cter in SUMO) cross-links involve residues Lys11 and Lys30. Thr47 carries the post-translational modification Phosphothreonine. Over residues 51–64 the composition is skewed to basic and acidic residues; that stretch reads DSERFEAAESDVKV. Ser60 is modified (phosphoserine). Residue Lys63 forms a Glycyl lysine isopeptide (Lys-Gly) (interchain with G-Cter in SUMO) linkage. Ser77 is modified (phosphoserine). A Septin-type G domain is found at 116 to 411; that stretch reads NGFSFNLLCV…ENYRSSKLAK (296 aa). Residues 126–133 are G1 motif; the sequence is GPDGIGKT. 126 to 133 lines the GTP pocket; sequence GPDGIGKT. A compositionally biased stretch (acidic residues) spans 156-167; it reads ELANDQEEEEGQ. Residues 156–181 form a disordered region; that stretch reads ELANDQEEEEGQGEGHENQSQEQRHK. Residues 168–179 are compositionally biased toward basic and acidic residues; the sequence is GEGHENQSQEQR. Phosphoserine is present on Ser175. The interval 204 to 207 is G3 motif; it reads DTEG. GTP-binding positions include Gly207, 287–295, Gly344, and Arg360; that span reads KSDILTDEE. A G4 motif region spans residues 286–289; the sequence is AKSD. Lys287 is covalently cross-linked (Glycyl lysine isopeptide (Lys-Gly) (interchain with G-Cter in SUMO)). The stretch at 427–508 forms a coiled coil; it reads ISKQQEEKTL…INSASPNVNH (82 aa). Thr468 carries the post-translational modification Phosphothreonine. The interval 496-520 is disordered; the sequence is ELSINSASPNVNHSPVPTKKKGFLR. The span at 497 to 510 shows a compositional bias: polar residues; it reads LSINSASPNVNHSP. A Phosphoserine modification is found at Ser509.

It belongs to the TRAFAC class TrmE-Era-EngA-EngB-Septin-like GTPase superfamily. Septin GTPase family. As to quaternary structure, component of the septin complex which consists of CDC3, CDC10, CDC11, CDC12 and probably SHS1 and rearranges to a cortical collar of highly ordered filaments at the mother-bud-neck. A complex formed by CDC3, CDC10, CDC11 and CDC12 is capable of forming long filaments in vitro and the components seem to be present in a 2:2:2:2 arrangement in vivo. The filaments are proposed to be formed by the end-to-end polymerization of CDC3-CDC12-CDC11 complexes with CDC10 serving as a bridge to bundle the polymers into paired filaments. Component of the GIN4 complex composed of at least BNI5, CDC3, CDC10, CDC11, CDC12, GIN4, NAP1 and SHS1. Self-associates. Interacts with SIZ1 and SYP1. In terms of processing, phosphorylated by CDC28. Phosphorylation at the end of G1 may facilitate initiation of a new cell cycle by promoting disassembly of the obsolete septin ring from the previous cell cycle. Sumoylated during mitosis on the mother cell side of the bud neck by UBC9/SIZ1. Sumoylation probably plays a central role in regulating septin ring disassembly during the cell cycle.

It is found in the membrane. The protein resides in the bud neck. Functionally, septins are GTPases involved in cytokinesis that assemble early in the cell cycle as a patch at the incipient bud site and form a ring approximate 15 minutes before bud emergence, which transforms into an hour-glass shaped collar of cortical filaments that spans both sides of the mother-bud neck. This collar persists until just before cytokinesis, when it splits into two rings that occupy opposite sides of the neck. The septins at the bud neck serve as a structural scaffold that recruits different components involved in diverse processes at specific stages during the cell cycle. Many proteins bind asymmetrically to the septin collar. The septin assembly is regulated by protein kinases GIN4 and/or CLA4. May act by recruiting MYO1 and HOF1, a protein involved in septation, to the site of cleavage. Septins are also involved in cell morphogenesis, bud site selection, chitin deposition, cell cycle regulation, cell compartmentalization and spore wall formation. The chain is Cell division control protein 3 (CDC3) from Saccharomyces cerevisiae (strain ATCC 204508 / S288c) (Baker's yeast).